The primary structure comprises 331 residues: uncharacterized protein (331 aa).

WD repeat units follow at residues 53-92 (KAHT…KSAV), 97-139 (QQST…KLIR), 144-184 (AHND…DSTD), and 300-331 (ASEE…AFRV).

The protein localises to the cytoplasm. The protein resides in the nucleus. This is an uncharacterized protein from Schizosaccharomyces pombe (strain 972 / ATCC 24843) (Fission yeast).